A 109-amino-acid chain; its full sequence is Large ribosomal subunit protein uL24 (109 aa).

Positions 1–24 (MANVTTDIKRNDTVAVTSGKDKGK) are disordered.

This sequence belongs to the universal ribosomal protein uL24 family. As to quaternary structure, part of the 50S ribosomal subunit.

One of two assembly initiator proteins, it binds directly to the 5'-end of the 23S rRNA, where it nucleates assembly of the 50S subunit. Functionally, one of the proteins that surrounds the polypeptide exit tunnel on the outside of the subunit. The polypeptide is Large ribosomal subunit protein uL24 (Koribacter versatilis (strain Ellin345)).